Reading from the N-terminus, the 512-residue chain is tRNA-2-methylthio-N(6)-dimethylallyladenosine synthase (512 aa).

The interval 1–20 (MLQQADGVSPDRSSCDTPAP) is disordered. Positions 21–137 (RTFEVRTYGC…LPTLLDRARH (117 aa)) constitute an MTTase N-terminal domain. [4Fe-4S] cluster is bound by residues Cys30, Cys66, Cys100, Cys174, Cys178, and Cys181. The 238-residue stretch at 160 to 397 (RESAYAAWVS…ELQERISWEE (238 aa)) folds into the Radical SAM core domain. The region spanning 399–469 (RAQIGREVEL…PHHLIADAGP (71 aa)) is the TRAM domain. Residues 470-486 (AEHRRTRAGDAHAEGRT) show a composition bias toward basic and acidic residues. Positions 470 to 512 (AEHRRTRAGDAHAEGRTPKTGVGLGMPGIGAPEPAPVTQGCAL) are disordered.

Belongs to the methylthiotransferase family. MiaB subfamily. In terms of assembly, monomer. [4Fe-4S] cluster is required as a cofactor.

It localises to the cytoplasm. It catalyses the reaction N(6)-dimethylallyladenosine(37) in tRNA + (sulfur carrier)-SH + AH2 + 2 S-adenosyl-L-methionine = 2-methylsulfanyl-N(6)-dimethylallyladenosine(37) in tRNA + (sulfur carrier)-H + 5'-deoxyadenosine + L-methionine + A + S-adenosyl-L-homocysteine + 2 H(+). Functionally, catalyzes the methylthiolation of N6-(dimethylallyl)adenosine (i(6)A), leading to the formation of 2-methylthio-N6-(dimethylallyl)adenosine (ms(2)i(6)A) at position 37 in tRNAs that read codons beginning with uridine. This Mycolicibacterium gilvum (strain PYR-GCK) (Mycobacterium gilvum (strain PYR-GCK)) protein is tRNA-2-methylthio-N(6)-dimethylallyladenosine synthase.